Here is a 226-residue protein sequence, read N- to C-terminus: Orotidine 5'-phosphate decarboxylase (226 aa).

Substrate-binding positions include D8, K30, 58–67, T117, R177, Q186, G206, and R207; that span reads DLKLYDIPNT. Catalysis depends on K60, which acts as the Proton donor.

This sequence belongs to the OMP decarboxylase family. Type 1 subfamily. As to quaternary structure, homodimer.

It carries out the reaction orotidine 5'-phosphate + H(+) = UMP + CO2. The protein operates within pyrimidine metabolism; UMP biosynthesis via de novo pathway; UMP from orotate: step 2/2. Its function is as follows. Catalyzes the decarboxylation of orotidine 5'-monophosphate (OMP) to uridine 5'-monophosphate (UMP). The polypeptide is Orotidine 5'-phosphate decarboxylase (Campylobacter concisus (strain 13826)).